The chain runs to 531 residues: T-complex protein 1 subunit zeta (531 aa).

At alanine 2 the chain carries N-acetylalanine. Lysine 5 is subject to N6-acetyllysine. Glycine 39 provides a ligand contact to ADP. ATP is bound at residue glycine 39. Aspartate 90 serves as a coordination point for Mg(2+). ADP contacts are provided by glycine 91, threonine 92, threonine 93, serine 94, threonine 158, and lysine 159. 3 residues coordinate ATP: glycine 91, threonine 92, and threonine 93. Lysine 199 is modified (N6-acetyllysine). Position 205 is a phosphoserine (serine 205). A Glycyl lysine isopeptide (Lys-Gly) (interchain with G-Cter in SUMO2) cross-link involves residue lysine 251. An N6-acetyllysine mark is found at lysine 287, lysine 365, lysine 377, and lysine 388. Alanine 411 contacts ADP. ATP-binding residues include alanine 411, glycine 412, aspartate 496, and lysine 501. Aspartate 496 provides a ligand contact to ADP.

The protein belongs to the TCP-1 chaperonin family. In terms of assembly, component of the chaperonin-containing T-complex (TRiC), a hexadecamer composed of two identical back-to-back stacked rings enclosing a protein folding chamber. Each ring is made up of eight different subunits: TCP1/CCT1, CCT2, CCT3, CCT4, CCT5, CCT6A/CCT6, CCT7, CCT8. Interacts with PACRG.

It is found in the cytoplasm. The catalysed reaction is ATP + H2O = ADP + phosphate + H(+). Functionally, component of the chaperonin-containing T-complex (TRiC), a molecular chaperone complex that assists the folding of actin, tubulin and other proteins upon ATP hydrolysis. The TRiC complex mediates the folding of WRAP53/TCAB1, thereby regulating telomere maintenance. In Pongo abelii (Sumatran orangutan), this protein is T-complex protein 1 subunit zeta (CCT6).